The sequence spans 747 residues: Cyclic di-GMP phosphodiesterase PdeF (747 aa).

The Periplasmic segment spans residues 1–14 (MKLNATYIKIRDKW). A helical transmembrane segment spans residues 15-36 (WGLPLFLPSLILPIFAHINTFA). The Cytoplasmic segment spans residues 37–42 (HISSGE). The helical transmembrane segment at 43 to 65 (VFLFYLPLALMISMMMFFSWAAL) threads the bilayer. The Periplasmic portion of the chain corresponds to 66 to 79 (PGIALGIFVRKYAE). A helical transmembrane segment spans residues 80–102 (LGFYETLSLTANFIIIIILCWGG). Topologically, residues 103-128 (YRVFTPRRNNVSHGDTRLISQRIFWQ) are cytoplasmic. Residues 129–151 (IVFPATLFLILFQFAAFVGLLAS) traverse the membrane as a helical segment. Over 152-165 (RENLVGVMPFNLGT) the chain is Periplasmic. A helical transmembrane segment spans residues 166–188 (LINYQALLVGNLIGVPLCYFIIR). Residues 189 to 215 (VVRNPFYLRSYYSQLKQQVDAKVTKKE) are Cytoplasmic-facing. A helical membrane pass occupies residues 216-235 (FALWLLALGALLLLLCMPLN). Topologically, residues 236–239 (EKST) are periplasmic. Residues 240–259 (IFSTNYTLSLLLPLMMWGAM) form a helical membrane-spanning segment. Topologically, residues 260–265 (RYGYKL) are cytoplasmic. Residues 266–285 (ISLLWAVVLMISIHSYQNYI) traverse the membrane as a helical segment. The Periplasmic portion of the chain corresponds to 286 to 294 (PIYPGYTTQ). A helical membrane pass occupies residues 295–317 (LTITSSSYLVFSFIVNYMAVLAT). At 318-747 (RQRAVVRRIQ…NEIEPIRESA (430 aa)) the chain is on the cytoplasmic side. The region spanning 493 to 744 (KVAMMNRLQQ…DTLNEIEPIR (252 aa)) is the EAL domain.

The cofactor is Mg(2+). Mn(2+) serves as cofactor.

The protein resides in the cell inner membrane. It carries out the reaction 3',3'-c-di-GMP + H2O = 5'-phosphoguanylyl(3'-&gt;5')guanosine + H(+). Inhibited by pGpG. In terms of biological role, phosphodiesterase (PDE) that catalyzes the hydrolysis of cyclic-di-GMP (c-di-GMP) to 5'-pGpG. Truncated proteins consisting of the GGDEF/EAL domains (residues 319-747) or of the EAL domain alone (481-747) have c-di-GMP phosphodiesterase activity. They do not have diguanylate cyclase activity. Cyclic-di-GMP is a second messenger which controls cell surface-associated traits in bacteria. This Escherichia coli (strain K12) protein is Cyclic di-GMP phosphodiesterase PdeF.